The chain runs to 343 residues: MSAFTPASEVLLRHSDDFEQSRILFAGDLQDDLPARLDTAASRAHTQQFHHWQVLSRQMGDNARFSLVATADDVADCDTLIYYWPKNKPEAQFQLMNLLSLLPVGTDIFVVGENRSGVRSAEQMLADYAPLNKVDSARRCGLYFGRLEKQPVFDAEKFWGEYSVDGLTVKTLPGVFSRDGLDVGSQLLLSTLTPHTKGKVLDVGCGAGVLSVAFARHSPKIRLTLCDVSAPAVEASRATLAANGVEGEVFASNVFSEVKGRFDMIISNPPFHDGMQTSLDAAQTLIRGAVRHLNSGGELRIVANAFLPYPDVLDETFGFHEVIAQTGRFKVYRAIMTRQAKKG.

Belongs to the methyltransferase superfamily. RsmC family. Monomer.

Its subcellular location is the cytoplasm. The catalysed reaction is guanosine(1207) in 16S rRNA + S-adenosyl-L-methionine = N(2)-methylguanosine(1207) in 16S rRNA + S-adenosyl-L-homocysteine + H(+). In terms of biological role, specifically methylates the guanine in position 1207 of 16S rRNA in the 30S particle. The chain is Ribosomal RNA small subunit methyltransferase C from Escherichia coli (strain K12 / DH10B).